An 85-amino-acid chain; its full sequence is U4-theraphotoxin-Hhn1ab (85 aa).

Positions 1–22 (MKVTLIAILTCAAVLVLHTTAA) are cleaved as a signal peptide. Positions 23–48 (EELEAESQLMEVGMPDTELAAVDEER) are excised as a propeptide. 2 disulfides stabilise this stretch: C56–C77 and C71–C82.

The protein belongs to the neurotoxin 12 (Hwtx-2) family. 02 (Hwtx-2) subfamily. As to expression, expressed by the venom gland.

The protein localises to the secreted. In terms of biological role, postsynaptic neurotoxin. This is U4-theraphotoxin-Hhn1ab from Cyriopagopus hainanus (Chinese bird spider).